The chain runs to 551 residues: CTP synthase (551 aa).

The segment at 1 to 265 (MTRYLFITGG…DHIVAEKWGL (265 aa)) is amidoligase domain. Residue Ser13 coordinates CTP. Ser13 is a binding site for UTP. Residues 14 to 19 (SLGKGI) and Asp71 each bind ATP. Mg(2+) contacts are provided by Asp71 and Glu139. CTP-binding positions include 146–148 (DIE), 186–191 (KTKPTQ), and Lys222. UTP-binding positions include 186-191 (KTKPTQ) and Lys222. A Glutamine amidotransferase type-1 domain is found at 290 to 541 (TVAMVGKYVD…LRAAIAHRDG (252 aa)). L-glutamine is bound at residue Gly351. Cys378 acts as the Nucleophile; for glutamine hydrolysis in catalysis. L-glutamine-binding positions include 379–382 (LGMQ), Glu402, and Arg469. Catalysis depends on residues His514 and Glu516.

The protein belongs to the CTP synthase family. Homotetramer.

It catalyses the reaction UTP + L-glutamine + ATP + H2O = CTP + L-glutamate + ADP + phosphate + 2 H(+). The enzyme catalyses L-glutamine + H2O = L-glutamate + NH4(+). The catalysed reaction is UTP + NH4(+) + ATP = CTP + ADP + phosphate + 2 H(+). Its pathway is pyrimidine metabolism; CTP biosynthesis via de novo pathway; CTP from UDP: step 2/2. With respect to regulation, allosterically activated by GTP, when glutamine is the substrate; GTP has no effect on the reaction when ammonia is the substrate. The allosteric effector GTP functions by stabilizing the protein conformation that binds the tetrahedral intermediate(s) formed during glutamine hydrolysis. Inhibited by the product CTP, via allosteric rather than competitive inhibition. Functionally, catalyzes the ATP-dependent amination of UTP to CTP with either L-glutamine or ammonia as the source of nitrogen. Regulates intracellular CTP levels through interactions with the four ribonucleotide triphosphates. This Halorhodospira halophila (strain DSM 244 / SL1) (Ectothiorhodospira halophila (strain DSM 244 / SL1)) protein is CTP synthase.